The chain runs to 237 residues: Phosphoribosylaminoimidazole-succinocarboxamide synthase (237 aa).

Belongs to the SAICAR synthetase family.

It catalyses the reaction 5-amino-1-(5-phospho-D-ribosyl)imidazole-4-carboxylate + L-aspartate + ATP = (2S)-2-[5-amino-1-(5-phospho-beta-D-ribosyl)imidazole-4-carboxamido]succinate + ADP + phosphate + 2 H(+). Its pathway is purine metabolism; IMP biosynthesis via de novo pathway; 5-amino-1-(5-phospho-D-ribosyl)imidazole-4-carboxamide from 5-amino-1-(5-phospho-D-ribosyl)imidazole-4-carboxylate: step 1/2. This is Phosphoribosylaminoimidazole-succinocarboxamide synthase from Marinobacter nauticus (strain ATCC 700491 / DSM 11845 / VT8) (Marinobacter aquaeolei).